Reading from the N-terminus, the 595-residue chain is SVP1-like protein 2 (595 aa).

The tract at residues 1 to 28 (MVLAHSINTNPNTNTNTNNTSTTSSTTT) is disordered. One copy of the WD 1 repeat lies at 30 to 68 (PNDSKILCINFNQDQGCFAISHEQGFLVYNTDPIELRVK). 2 stretches are compositionally biased toward low complexity: residues 76 to 112 (HTTS…GSNN) and 270 to 339 (LSPT…TTTT). 2 disordered regions span residues 76–132 (HTTS…GSGS) and 264–342 (FSKR…TSAK). WD repeat units lie at residues 389 to 429 (AHKS…LLYE) and 434 to 473 (IDRA…YPND). Residues 467 to 490 (ETQYPNDGGSGGTKDGGGGGRGSK) are disordered. A compositionally biased stretch (gly residues) spans 474 to 488 (GGSGGTKDGGGGGRG).

This sequence belongs to the WD repeat PROPPIN family.

The protein localises to the vacuole membrane. Its subcellular location is the cytoplasmic vesicle membrane. In terms of biological role, involved in mitochondrial or peroxisomal functions and amino acid signaling pathways. The polypeptide is SVP1-like protein 2 (HSV2) (Candida albicans (strain SC5314 / ATCC MYA-2876) (Yeast)).